The sequence spans 380 residues: MAPNIRKSHPLLKMVNNSLIDLPTPSNISAWWNFGSLLGICLMTQILTGLLLAMHYTADTNLAFSSVSHTCRNVQYGWLIRNLHANGASLFFICIYLHIGRGIYYGSYLYKETWNTGIILLLTLMATAFVGYVLPWGQMSFWGATVITNLFSAIPYIGQTLVEWAWGGFSVDNPTLTRFFALHFLLPFLIAGLTLIHLTFLHESGSNNPLGITSNCDKIPFHPYFSSKDILGFMLLYFLLTTLALLSPNLLGDPENFTPANPLVTPPHIKPEWYFLFAYAILRSIPNKLGGVLALAASILILFLSPFLHKSKQRTMTFRPLSQALFWLLVTNLFILTWIGSQPVEHPFIIIGQLASLSYFTILLILLPLTGALENKILNY.

4 consecutive transmembrane segments (helical) span residues 34–54 (FGSLLGICLMTQILTGLLLAM), 78–99 (WLIRNLHANGASLFFICIYLHI), 114–134 (WNTGIILLLTLMATAFVGYVL), and 179–199 (FFALHFLLPFLIAGLTLIHLT). Heme b contacts are provided by His84 and His98. Residues His183 and His197 each contribute to the heme b site. Residue His202 coordinates a ubiquinone. 4 helical membrane-spanning segments follow: residues 227-247 (SKDILGFMLLYFLLTTLALLS), 289-309 (LGGVLALAASILILFLSPFLH), 321-341 (LSQALFWLLVTNLFILTWIGS), and 348-368 (FIIIGQLASLSYFTILLILLP).

The protein belongs to the cytochrome b family. In terms of assembly, the cytochrome bc1 complex contains 11 subunits: 3 respiratory subunits (MT-CYB, CYC1 and UQCRFS1), 2 core proteins (UQCRC1 and UQCRC2) and 6 low-molecular weight proteins (UQCRH/QCR6, UQCRB/QCR7, UQCRQ/QCR8, UQCR10/QCR9, UQCR11/QCR10 and a cleavage product of UQCRFS1). This cytochrome bc1 complex then forms a dimer. Heme b serves as cofactor.

The protein localises to the mitochondrion inner membrane. Its function is as follows. Component of the ubiquinol-cytochrome c reductase complex (complex III or cytochrome b-c1 complex) that is part of the mitochondrial respiratory chain. The b-c1 complex mediates electron transfer from ubiquinol to cytochrome c. Contributes to the generation of a proton gradient across the mitochondrial membrane that is then used for ATP synthesis. The protein is Cytochrome b (MT-CYB) of Phalcoboenus australis (Striated caracara).